A 644-amino-acid chain; its full sequence is MFQDNPLLAQLKQQLHSQTPRAEGVVKATEKGFGFLEVDAQKSYFIPPPQMKKVMHGDRIVAVIHTEKERESAEPEALIEPFLTRFVGKIQGKNDRLTIVPDHPMLKDAIPCRAARGVQHEFKEGDWAVAEMRRHPLKGDRSFYADLTQYITFADDHFAPWWVTLARHNLEKEAPNGVATEMLDEGLERQDLTALNFVTIDSASTEDMDDALYAEELADGRLQLTVAIADPTAWIAEGSKLDNAAKIRAFTNYLPGFNIPMLPRELSDDLCSLRANEVRPTLTCRMIIAADGSIDDDIAFFAATIESKAKLAYDNVSDWLENSGTWQPDNEGIAQQIRLLHRICLSRGEWRHHHALVFKDRPDYRFVLGEKGEVLDIVAEPRRIANRIVEESMIAANLCAARVLRDKLGFGIYNVHTGFDPANADALAALLKTHGLHVDAEEVLTLEGFCKLRRELDAQPSGFLDSRIRRFQSFAEISTEPGPHFGLGLEAYATWTSPIRKYGDMINHRLLKAVIKGETIARPREDITQQMAERRRLNRMAERDVGDWLYARFLNDKAGTDTRFAAEIIDVSRGGMRVRLVDNGAVAFIPASFLHAVRDELVCSQENGTIQIKGETVYKVTDVIDVTIAEVRMDTRSIIARPAA.

An RNB domain is found at Arg189–Lys516. The S1 motif domain occupies Asp561 to Ala643.

This sequence belongs to the RNR ribonuclease family. RNase II subfamily.

The protein localises to the cytoplasm. It carries out the reaction Exonucleolytic cleavage in the 3'- to 5'-direction to yield nucleoside 5'-phosphates.. In terms of biological role, involved in mRNA degradation. Hydrolyzes single-stranded polyribonucleotides processively in the 3' to 5' direction. This Salmonella arizonae (strain ATCC BAA-731 / CDC346-86 / RSK2980) protein is Exoribonuclease 2.